A 598-amino-acid polypeptide reads, in one-letter code: IQ calmodulin-binding motif-containing protein 1 (598 aa).

The interaction with BBS1, BBS8 and BBS9 stretch occupies residues M1–V157. The segment at Q287–P598 is interaction with CEP290, BBS1, BBS2, BBS4, BBS5, BBS7, BBS8 and BBS9. IQ domains lie at L294–L317, P318–E338, E387–E416, and Y417–K437. A coiled-coil region spans residues L336–I373. The tract at residues A530 to P598 is interaction with BBS1, BBS2, BBS4, BBS7, BBS8 and BBS9. S572 carries the post-translational modification Phosphoserine.

As to quaternary structure, interacts with CEP290/NPHP6; IQCB1/NPHP5 and CEP290 are proposed to form a functional NPHP5-6 module/NPHP6; localized to the centrosome. Interacts with calmodulin, ATXN10. Interacts with NPHP1, INVS, NPHP4 and RPGRIP1L; these interactions likely require additional interactors. Associates with the BBSome complex; interacts with BBS1, BBS2, BBS4, BBS5, BBS7, BBS8 and BBS9. In terms of tissue distribution, ubiquitously expressed in fetal and adult tissues. Localized to the outer segments and connecting cilia of photoreceptor cells. Up-regulated in a number of primary colorectal and gastric tumors.

Its subcellular location is the cytoplasm. The protein localises to the cytoskeleton. It is found in the microtubule organizing center. The protein resides in the centrosome. It localises to the centriole. Its function is as follows. Involved in ciliogenesis. The function in an early step in cilia formation depends on its association with CEP290/NPHP6. Involved in regulation of the BBSome complex integrity, specifically for presence of BBS2 and BBS5 in the complex, and in ciliary targeting of selected BBSome cargos. May play a role in controlling entry of the BBSome complex to cilia possibly implicating CEP290/NPHP6. The polypeptide is IQ calmodulin-binding motif-containing protein 1 (IQCB1) (Homo sapiens (Human)).